The primary structure comprises 501 residues: MKTLISSSLSHKSQCLTICFKLNKLAMVYYTREFQTEASQTSASGSMFSGNATTILRRMLAEKRIGRFQVENQRKTEKLDKTLKGLCVTGRLKEAVGLLWSSGLQVEPETYAVLLQECKQRKEYTKGKRIHAQMFVVGFALNEYLKVKLLILYALSGDLQTAGILFRSLKIRDLIPWNAMISGYVQKGLEQEGLFIYYDMRQNRIVPDQYTFASVFRACSALDRLEHGKRAHAVMIKRCIKSNIIVDSALVDMYFKCSSFSDGHRVFDQLSTRNVITWTSLISGYGYHGKVSEVLKCFEKMKEEGCRPNPVTFLVVLTACNHGGLVDKGWEHFYSMKRDYGIEPEGQHYAAMVDTLGRAGRLQEAYEFVMKSPCKEHPPVWGSLLGACRIHGNVKLLELAATKFLELDPTNGGNYVVFANGYASCGLREAASKVRRKMENAGVKKDPGYSQIELQGEVHRFMKDDTSHRLSEKIYKKVHEMTSFFMDIDYYPDGLDSSCPV.

PPR repeat units follow at residues 107–141 (EPET…GFAL), 142–172 (NEYL…LKIR), 173–207 (DLIP…RIVP), 208–242 (DQYT…CIKS), 243–273 (NIIV…LSTR), 274–308 (NVIT…GCRP), 309–344 (NPVT…GIEP), and 345–379 (EGQH…EHPP). A type E motif region spans residues 380-455 (VWGSLLGACR…DPGYSQIELQ (76 aa)). The type E(+) motif stretch occupies residues 456–486 (GEVHRFMKDDTSHRLSEKIYKKVHEMTSFFM).

The protein belongs to the PPR family. PCMP-E subfamily.

The chain is Pentatricopeptide repeat-containing protein At4g16470 (PCMP-E12) from Arabidopsis thaliana (Mouse-ear cress).